Consider the following 499-residue polypeptide: Thioredoxin reductase 1, cytoplasmic (499 aa).

FAD is bound by residues 22-23, 42-43, 58-59, and 63-67; these read SG, DF, TC, and GCIPK. An intrachain disulfide couples Cys-59 to Cys-64. Residue Lys-68 is modified to N6-succinyllysine. At Tyr-131 the chain carries Phosphotyrosine. Residues 131–132 and Thr-161 each bind FAD; that span reads YG. NADP(+) contacts are provided by residues Arg-166, 198–204, 221–222, Arg-226, 226–228, 292–293, and Lys-315; these read ASYVALE, RS, RGF, and GR. Tyr-200 is an FAD binding site. FAD is bound by residues Asp-334, 341 to 343, and His-472; that span reads ELT. Glu-341 is an NADP(+) binding site. The active-site Proton acceptor is His-472. Residues 497–498 constitute a cross-link (cysteinyl-selenocysteine (Cys-Sec)); it reads CU. Position 498 (Sec-498) is a non-standard amino acid, selenocysteine.

The protein belongs to the class-I pyridine nucleotide-disulfide oxidoreductase family. As to quaternary structure, homodimer. Requires FAD as cofactor. Post-translationally, ISGylated.

It localises to the cytoplasm. The enzyme catalyses [thioredoxin]-dithiol + NADP(+) = [thioredoxin]-disulfide + NADPH + H(+). The catalysed reaction is H2O2 + NADPH + H(+) = NADP(+) + 2 H2O. Reduces disulfideprotein thioredoxin (Trx) to its dithiol-containing form. Homodimeric flavoprotein involved in the regulation of cellular redox reactions, growth and differentiation. Contains a selenocysteine residue at the C-terminal active site that is essential for catalysis. Also has reductase activity on hydrogen peroxide (H2O2). The chain is Thioredoxin reductase 1, cytoplasmic (TXNRD1) from Bos taurus (Bovine).